A 652-amino-acid chain; its full sequence is DNA ligase (652 aa).

NAD(+) is bound by residues Asp-29 to Asp-33, Ser-78 to Leu-79, and Glu-107. The active-site N6-AMP-lysine intermediate is Lys-109. Residues Arg-130, Glu-164, Lys-278, and Lys-302 each contribute to the NAD(+) site. The Zn(2+) site is built by Cys-395, Cys-398, Cys-413, and Cys-418. In terms of domain architecture, BRCT spans Val-577 to Leu-652.

Belongs to the NAD-dependent DNA ligase family. LigA subfamily. Mg(2+) is required as a cofactor. Requires Mn(2+) as cofactor.

The enzyme catalyses NAD(+) + (deoxyribonucleotide)n-3'-hydroxyl + 5'-phospho-(deoxyribonucleotide)m = (deoxyribonucleotide)n+m + AMP + beta-nicotinamide D-nucleotide.. In terms of biological role, DNA ligase that catalyzes the formation of phosphodiester linkages between 5'-phosphoryl and 3'-hydroxyl groups in double-stranded DNA using NAD as a coenzyme and as the energy source for the reaction. It is essential for DNA replication and repair of damaged DNA. The sequence is that of DNA ligase from Streptococcus pneumoniae serotype 4 (strain ATCC BAA-334 / TIGR4).